A 499-amino-acid polypeptide reads, in one-letter code: Glutamyl-tRNA(Gln) amidotransferase subunit A (499 aa).

Residues Lys-76 and Ser-151 each act as charge relay system in the active site. The active-site Acyl-ester intermediate is Ser-175.

Belongs to the amidase family. GatA subfamily. Heterotrimer of A, B and C subunits.

It carries out the reaction L-glutamyl-tRNA(Gln) + L-glutamine + ATP + H2O = L-glutaminyl-tRNA(Gln) + L-glutamate + ADP + phosphate + H(+). Its function is as follows. Allows the formation of correctly charged Gln-tRNA(Gln) through the transamidation of misacylated Glu-tRNA(Gln) in organisms which lack glutaminyl-tRNA synthetase. The reaction takes place in the presence of glutamine and ATP through an activated gamma-phospho-Glu-tRNA(Gln). The sequence is that of Glutamyl-tRNA(Gln) amidotransferase subunit A from Rhodopirellula baltica (strain DSM 10527 / NCIMB 13988 / SH1).